Consider the following 347-residue polypeptide: Haptoglobin (347 aa).

The N-terminal stretch at 1 to 18 is a signal peptide; the sequence is MSALGAVIALLLWGQLFA. The region spanning 31-88 is the Sushi domain; it reads DGCPKPPEIANGYVEHLVRYQCKKYYRLRTEGDGVYTLNNEKQWTNKAVGDKLPECEA. 4 disulfides stabilise this stretch: Cys-52–Cys-86, Cys-90–Cys-207, Cys-250–Cys-281, and Cys-292–Cys-322. Positions 103 to 345 constitute a Peptidase S1 domain; sequence ILGGHLDAKG…IQDWVQKTIA (243 aa). Residues Asn-125, Asn-148, Asn-152, and Asn-182 are each glycosylated (N-linked (GlcNAc...) asparagine). Positions 259-264 are interaction with CD163; that stretch reads VPEKKT.

It belongs to the peptidase S1 family. Tetramer of two alpha and two beta chains; disulfide-linked. The hemoglobin/haptoglobin complex is composed of a haptoglobin dimer bound to two hemoglobin alpha-beta dimers. Interacts with CD163. Interacts with ERGIC3. As to expression, expressed by the liver and secreted in plasma.

It is found in the secreted. Functionally, as a result of hemolysis, hemoglobin is found to accumulate in the kidney and is secreted in the urine. Haptoglobin captures, and combines with free plasma hemoglobin to allow hepatic recycling of heme iron and to prevent kidney damage. Haptoglobin also acts as an antioxidant, has antibacterial activity and plays a role in modulating many aspects of the acute phase response. Hemoglobin/haptoglobin complexes are rapidly cleared by the macrophage CD163 scavenger receptor expressed on the surface of liver Kupfer cells through an endocytic lysosomal degradation pathway. This chain is Haptoglobin (HP), found in Ateles geoffroyi (Black-handed spider monkey).